A 210-amino-acid chain; its full sequence is Ribonuclease HII (210 aa).

Residues 18-208 (YPVAGIDEAG…VNDIISQTKL (191 aa)) form the RNase H type-2 domain. The a divalent metal cation site is built by D24, E25, and D116.

It belongs to the RNase HII family. Requires Mn(2+) as cofactor. The cofactor is Mg(2+).

The protein resides in the cytoplasm. The catalysed reaction is Endonucleolytic cleavage to 5'-phosphomonoester.. In terms of biological role, endonuclease that specifically degrades the RNA of RNA-DNA hybrids. This chain is Ribonuclease HII, found in Endomicrobium trichonymphae.